The primary structure comprises 242 residues: Carboxy-S-adenosyl-L-methionine synthase (242 aa).

S-adenosyl-L-methionine is bound by residues Tyr-39, 64–66 (GCS), 89–90 (DN), 117–118 (DI), Asn-132, and Arg-199.

The protein belongs to the class I-like SAM-binding methyltransferase superfamily. Cx-SAM synthase family. Homodimer.

The enzyme catalyses prephenate + S-adenosyl-L-methionine = carboxy-S-adenosyl-L-methionine + 3-phenylpyruvate + H2O. Functionally, catalyzes the conversion of S-adenosyl-L-methionine (SAM) to carboxy-S-adenosyl-L-methionine (Cx-SAM). The sequence is that of Carboxy-S-adenosyl-L-methionine synthase from Vibrio atlanticus (strain LGP32) (Vibrio splendidus (strain Mel32)).